The sequence spans 470 residues: Tryptophan synthase beta chain 1, chloroplastic (470 aa).

Over residues 1-10 (MAASGTSATF) the composition is skewed to polar residues. The segment at 1 to 24 (MAASGTSATFRASVSSAPSSSSQL) is disordered. Over residues 12–22 (ASVSSAPSSSS) the composition is skewed to low complexity. N6-(pyridoxal phosphate)lysine is present on K165.

The protein belongs to the TrpB family. As to quaternary structure, tetramer of two alpha and two beta chains. The cofactor is pyridoxal 5'-phosphate.

The protein resides in the plastid. The protein localises to the chloroplast. It catalyses the reaction (1S,2R)-1-C-(indol-3-yl)glycerol 3-phosphate + L-serine = D-glyceraldehyde 3-phosphate + L-tryptophan + H2O. It functions in the pathway amino-acid biosynthesis; L-tryptophan biosynthesis; L-tryptophan from chorismate: step 5/5. Its function is as follows. The beta subunit is responsible for the synthesis of L-tryptophan from indole and L-serine. This chain is Tryptophan synthase beta chain 1, chloroplastic (TSB1), found in Arabidopsis thaliana (Mouse-ear cress).